The sequence spans 166 residues: Transcription antitermination protein NusB (166 aa).

Basic and acidic residues predominate over residues 1 to 18 (MISDESDRFNPRDPKPAD). The segment at 1–30 (MISDESDRFNPRDPKPADAGKPSKSAKRRE) is disordered.

This sequence belongs to the NusB family.

In terms of biological role, involved in transcription antitermination. Required for transcription of ribosomal RNA (rRNA) genes. Binds specifically to the boxA antiterminator sequence of the ribosomal RNA (rrn) operons. The polypeptide is Transcription antitermination protein NusB (Pseudomonas entomophila (strain L48)).